Here is a 507-residue protein sequence, read N- to C-terminus: Histidine ammonia-lyase (507 aa).

The segment at residues 141-143 (ASG) is a cross-link (5-imidazolinone (Ala-Gly)). Position 142 is a 2,3-didehydroalanine (Ser) (Ser-142).

Belongs to the PAL/histidase family. Contains an active site 4-methylidene-imidazol-5-one (MIO), which is formed autocatalytically by cyclization and dehydration of residues Ala-Ser-Gly.

It localises to the cytoplasm. It catalyses the reaction L-histidine = trans-urocanate + NH4(+). The protein operates within amino-acid degradation; L-histidine degradation into L-glutamate; N-formimidoyl-L-glutamate from L-histidine: step 1/3. The polypeptide is Histidine ammonia-lyase (Burkholderia pseudomallei (strain 1106a)).